Consider the following 309-residue polypeptide: Succinate dehydrogenase [ubiquinone] iron-sulfur subunit 3, mitochondrial (309 aa).

Residues Met-1–Leu-22 constitute a mitochondrion transit peptide. A 2Fe-2S ferredoxin-type domain is found at Phe-69–Met-160. The [2Fe-2S] cluster site is built by Cys-120, Cys-125, and Cys-140. Residues Asp-202–Phe-232 form the 4Fe-4S ferredoxin-type domain. Positions 212, 215, and 218 each coordinate [4Fe-4S] cluster. [3Fe-4S] cluster is bound at residue Cys-222. Trp-227 is an a ubiquinone binding site. [3Fe-4S] cluster is bound by residues Cys-270 and Cys-276. Cys-280 contacts [4Fe-4S] cluster.

Belongs to the succinate dehydrogenase/fumarate reductase iron-sulfur protein family. Component of complex II composed of eight subunits in plants: four classical SDH subunits SDH1, SDH2, SDH3 and SDH4 (a flavoprotein (FP), an iron-sulfur protein (IP), and a cytochrome b composed of a large and a small subunit.), as well as four subunits unknown in mitochondria from bacteria and heterotrophic eukaryotes. The cofactor is [2Fe-2S] cluster. [3Fe-4S] cluster serves as cofactor. [4Fe-4S] cluster is required as a cofactor.

The protein resides in the mitochondrion inner membrane. The catalysed reaction is a quinone + succinate = fumarate + a quinol. The protein operates within carbohydrate metabolism; tricarboxylic acid cycle; fumarate from succinate (eukaryal route): step 1/1. Iron-sulfur protein (IP) subunit of succinate dehydrogenase (SDH) that is involved in complex II of the mitochondrial electron transport chain and is responsible for transferring electrons from succinate to ubiquinone (coenzyme Q). The polypeptide is Succinate dehydrogenase [ubiquinone] iron-sulfur subunit 3, mitochondrial (SDH2-3) (Arabidopsis thaliana (Mouse-ear cress)).